A 275-amino-acid polypeptide reads, in one-letter code: 2,3,4,5-tetrahydropyridine-2,6-dicarboxylate N-succinyltransferase (275 aa).

Positions 105 and 142 each coordinate substrate.

The protein belongs to the transferase hexapeptide repeat family. As to quaternary structure, homotrimer.

The protein localises to the cytoplasm. The enzyme catalyses (S)-2,3,4,5-tetrahydrodipicolinate + succinyl-CoA + H2O = (S)-2-succinylamino-6-oxoheptanedioate + CoA. It participates in amino-acid biosynthesis; L-lysine biosynthesis via DAP pathway; LL-2,6-diaminopimelate from (S)-tetrahydrodipicolinate (succinylase route): step 1/3. This Pectobacterium atrosepticum (strain SCRI 1043 / ATCC BAA-672) (Erwinia carotovora subsp. atroseptica) protein is 2,3,4,5-tetrahydropyridine-2,6-dicarboxylate N-succinyltransferase.